The sequence spans 209 residues: Protein lin-28 homolog A (209 aa).

The tract at residues 1–31 (MGSVSNQQFAGGCAKAAEKAPEEAPPDAARA) is disordered. Gly2 carries the post-translational modification N-acetylglycine. Ser3 is modified (phosphoserine). One can recognise a CSD domain in the interval 39–112 (HGAGICKWFN…GLESIRVTGP (74 aa)). The interval 113 to 136 (GGVFCIGSERRPKGKNMQKRRSKG) is flexible linker. Ser120 carries the post-translational modification Phosphoserine. 2 consecutive CCHC-type zinc fingers follow at residues 137 to 154 (DRCYNCGGLDHHAKECKL) and 159 to 176 (KKCHFCQSINHMVASCPL). Positions 177–209 (KAQQGPSSQGKPAYFREEEEEIHSPALLPEAQN) are disordered. A Phosphoserine modification is found at Ser200.

This sequence belongs to the lin-28 family. As to quaternary structure, monomer. During skeletal muscle differentiation, associated with translation initiation complexes in the polysomal compartment. Directly interacts with EIF3S2. Interacts with NCL in an RNA-dependent manner. Interacts with TUT4 in the presence of pre-let-7 RNA. Expressed in embryonic stem cells (ES cells), spermatagonia and testis. Expressed in numerous epithelial tissues including the epithelia of the small intestine, the intralobular duct epithelium of the mammary gland and the epithelia of Henle's loop in the kidney and in the collecting duct (at protein level). Also expressed in the myocardium and skeletal muscle (at protein level).

Its subcellular location is the cytoplasm. The protein localises to the rough endoplasmic reticulum. The protein resides in the P-body. It is found in the stress granule. It localises to the nucleus. Its subcellular location is the nucleolus. RNA-binding protein that inhibits processing of pre-let-7 miRNAs and regulates translation of mRNAs that control developmental timing, pluripotency and metabolism. Seems to recognize a common structural G-quartet (G4) feature in its miRNA and mRNA targets. 'Translational enhancer' that drives specific mRNAs to polysomes and increases the efficiency of protein synthesis. Its association with the translational machinery and target mRNAs results in an increased number of initiation events per molecule of mRNA and, indirectly, in mRNA stabilization. Binds IGF2 mRNA, MYOD1 mRNA, ARBP/36B4 ribosomal protein mRNA and its own mRNA. Essential for skeletal muscle differentiation program through the translational up-regulation of IGF2 expression. Suppressor of microRNA (miRNA) biogenesis, including that of let-7, miR107, miR-143 and miR-200c. Specifically binds the miRNA precursors (pre-miRNAs), recognizing an 5'-GGAG-3' motif found in pre-miRNA terminal loop, and recruits TUT4 and TUT7 uridylyltransferaseS. This results in the terminal uridylation of target pre-miRNAs. Uridylated pre-miRNAs fail to be processed by Dicer and undergo degradation. The repression of let-7 expression is required for normal development and contributes to maintain the pluripotent state by preventing let-7-mediated differentiation of embryonic stem cells. Localized to the periendoplasmic reticulum area, binds to a large number of spliced mRNAs and inhibits the translation of mRNAs destined for the ER, reducing the synthesis of transmembrane proteins, ER or Golgi lumen proteins, and secretory proteins. Binds to and enhances the translation of mRNAs for several metabolic enzymes, such as PFKP, PDHA1 or SDHA, increasing glycolysis and oxidative phosphorylation. Which, with the let-7 repression may enhance tissue repair in adult tissue. In Mus musculus (Mouse), this protein is Protein lin-28 homolog A (Lin28a).